The sequence spans 593 residues: MPWAKEGDLQELLKAFPQASVVELQNSTSVIVPKDILIDVLKYLKEKLGYKLFLDHSVVDLKDLLENEKEFNKVVKQNLIAFPEDRESRFQAFYILYNVDERKRVIVKTRTNGKLPTIEKLWFAGKWAERECYDMFGIEYEGHENLVRAFMWDTYPYFPLRKDFPLEGIPEQELPSLNEVVFGDNLEGLMNYDRMHTRVPTLEDLEVTEKKRLKKKAQIVLNWGPLHPGTHGTMWFLFDLEGERIVQTDVILGQLHRGVEKLAEHEMYNQFLVYTDRMDYLSALCSNQAWVVAIERLMGIHDKVPPKAKYIRTMMSELQRINSHLLWLGTYALDLGALTIFLYAFKEREKIMDIIEGITGARLTISYPRIGGVRMDLPEGALEVIKAFIKKFPEELKDWETILTRNRIWLRRNKEVGIISKEDAYFHGVTGPVIRGSGIPYDIRKFEPYDAYDEVEFDIPVGEIGDCYDRYLVRIEEMKQSIRIIEQCVAKLEKMSKNEPFFYEGEGKKLKLSLDGIGVKAPVGEIYSSGENPRGELGFYVVSTGGTSPYRVKIRPPSYYNLCIYPHLMKDRYVADAVTILASIDPVVGETDR.

The tract at residues 1–193 is NADH dehydrogenase I subunit C; that stretch reads MPWAKEGDLQ…DNLEGLMNYD (193 aa). Positions 217–593 are NADH dehydrogenase I subunit D; that stretch reads AQIVLNWGPL…IDPVVGETDR (377 aa).

This sequence in the N-terminal section; belongs to the complex I 30 kDa subunit family. In the C-terminal section; belongs to the complex I 49 kDa subunit family. As to quaternary structure, NDH-1 is composed of 13 different subunits. Subunits NuoB, CD, E, F, and G constitute the peripheral sector of the complex.

It localises to the cell inner membrane. It catalyses the reaction a quinone + NADH + 5 H(+)(in) = a quinol + NAD(+) + 4 H(+)(out). Its function is as follows. NDH-1 shuttles electrons from NADH, via FMN and iron-sulfur (Fe-S) centers, to quinones in the respiratory chain. The immediate electron acceptor for the enzyme in this species is believed to be ubiquinone. Couples the redox reaction to proton translocation (for every two electrons transferred, four hydrogen ions are translocated across the cytoplasmic membrane), and thus conserves the redox energy in a proton gradient. The polypeptide is NADH-quinone oxidoreductase subunit C/D 1 (nuoC1) (Aquifex aeolicus (strain VF5)).